A 278-amino-acid chain; its full sequence is Neuronal membrane glycoprotein M6-a (278 aa).

Met-1 is subject to N-acetylmethionine. The Cytoplasmic portion of the chain corresponds to 1 to 22 (MEENMEEGQTQKGCFECCIKCL). A helical membrane pass occupies residues 23–43 (GGIPYASLIATILLYAGVALF). The Extracellular portion of the chain corresponds to 44-84 (CGCGHEALSGTVNILQTYFEMARTAGDTLDVFTMIDIFKYV). The chain crosses the membrane as a helical span at residues 85–105 (IYGIAAAFFVYGILLMVEGFF). Over 106-127 (TTGAIKDLYGDFKITTCGRCVS) the chain is Cytoplasmic. The helical transmembrane segment at 128 to 148 (AWFIMLTYLFMLAWLGVTAFT) threads the bilayer. At 149–213 (SLPVYMYFNL…STELNMTFHL (65 aa)) the chain is on the extracellular side. The N-linked (GlcNAc...) asparagine glycan is linked to Asn-164. Cys-174 and Cys-192 form a disulfide bridge. Asn-208 carries an N-linked (GlcNAc...) asparagine glycan. A helical membrane pass occupies residues 214–234 (FIVALAGAGAAVIAMVHYLMV). Topologically, residues 235–278 (LSANWAYVKDACRMQKYEDIKSKEEQELHDIHSTRSKERLNAYT) are cytoplasmic. Position 256 is a phosphoserine (Ser-256). Thr-278 carries the phosphothreonine modification.

It belongs to the myelin proteolipid protein family. In terms of assembly, interacts with OPRM1. Interacts with palmitoyltransferase ZDHHC17/HIP14; the interaction leads to palmitoylation of GPM6A. In terms of processing, N-glycosylated. Palmitoylated by ZDHHC17/HIP14.

Its subcellular location is the cell membrane. The protein localises to the cell projection. It localises to the axon. The protein resides in the growth cone. It is found in the dendritic spine. Its subcellular location is the filopodium. The protein localises to the neuron projection. Its function is as follows. Involved in neuronal differentiation, including differentiation and migration of neuronal stem cells. Plays a role in neuronal plasticity and is involved in neurite and filopodia outgrowth, filopodia motility and probably synapse formation. GPM6A-induced filopodia formation involves mitogen-activated protein kinase (MAPK) and Src signaling pathways. May be involved in neuronal NGF-dependent Ca(2+) influx. May be involved in regulation of endocytosis and intracellular trafficking of G-protein-coupled receptors (GPCRs); may enhance internalization and recycling of mu-type opioid receptor. The sequence is that of Neuronal membrane glycoprotein M6-a (GPM6A) from Bos taurus (Bovine).